Consider the following 284-residue polypeptide: MEMO1 family protein MmarC6_1286 (284 aa).

Belongs to the MEMO1 family.

This chain is MEMO1 family protein MmarC6_1286, found in Methanococcus maripaludis (strain C6 / ATCC BAA-1332).